A 343-amino-acid polypeptide reads, in one-letter code: Transmembrane protein 120A (343 aa).

The Cytoplasmic segment spans residues 1–132 (MQSPPPDPLG…KQAKFAYKDE (132 aa)). Lys-130 contributes to the CoA binding site. The helical transmembrane segment at 133 to 152 (YEKFKLYLTIILIVISFTCR) threads the bilayer. Residues 153 to 158 (FLLNSR) lie on the Extracellular side of the membrane. Residues 159 to 177 (VTDAAFNFLLVWYYCTLTI) traverse the membrane as a helical segment. Topologically, residues 178–190 (RESILINNGSRIK) are cytoplasmic. Ser-187 and Arg-188 together coordinate CoA. Residues 191 to 209 (GWWVFHHYVSTFLSGVMLT) traverse the membrane as a helical segment. The Extracellular segment spans residues 210-218 (WPDGLMYQK). A helical membrane pass occupies residues 219-240 (FRNQFLSFSMYQSFVQFLQYYY). CoA-binding residues include Gln-237, Tyr-240, Gln-241, and His-283. Residues 241–270 (QSGCLYRLRALGERHTMDLTVEGFQSWMWR) lie on the Cytoplasmic side of the membrane. A helical transmembrane segment spans residues 271–294 (GLTFLLPFLFFGHFWQLFNALTLF). At 295-304 (NLARDPECKE) the chain is on the extracellular side. A helical membrane pass occupies residues 305-330 (WQVLMCGLPFLLLFLGNFFTTLRVVH). The Cytoplasmic segment spans residues 331–343 (QKFHSQQHGSKKD). Lys-332 is a CoA binding site.

It belongs to the TMEM120 family. As to quaternary structure, homodimer. Forms heterooligomer with TMEM120B. Interacts with PKD2; TMEM120A inhibits PKD2 channel activity through the physical association of PKD2 with TMEM120A.

It localises to the cell membrane. The protein resides in the nucleus inner membrane. It is found in the endoplasmic reticulum. In terms of biological role, multifunctional protein involved in mechanosensation, and plays an essential role in lipid metabolism and adipocyte differentiation. May function as a potential ion channel involved in sensing mechanical stimuli. Mediates the mechanosensitivity of the PKD2-TMEM120A channel complex through direct physical interaction. TMEM120A seems to affect mechanosensation by inhibiting PIEZO2 channels, possibly by altering cellular lipid content. TMEM120A is structurally similar to a lipid-modifying enzyme, ELOVL7, and contains a bound coenzyme A molecule, which suggests it might function as an enzyme in lipid metabolism. Additionnaly, implicated in innate immune response against Zika virus. Acts as a key activator of the antiviral signaling involving STING1. This is Transmembrane protein 120A from Rattus norvegicus (Rat).